Reading from the N-terminus, the 443-residue chain is POU domain, class 3, transcription factor 3-B (443 aa).

Disordered stretches follow at residues 21–40, 100–150, and 182–244; these read IVHS…VTSV, SPWS…AGAW, and NGML…PTSD. Polar residues predominate over residues 101–121; sequence PWSSSPVGMTGSPQQQDVKNN. Residues 210-225 are compositionally biased toward basic residues; sequence SHHHHHHHQHQHHQQA. Residues 238–312 form the POU-specific domain; it reads EDTPTSDDLE…LLNKWLEEAD (75 aa). Serine 317 is modified (phosphoserine). Positions 330–389 form a DNA-binding region, homeobox; that stretch reads KRKKRTSIEVSVKGALESHFLKCPKPSAQEITSLADNLQLEKEVVRVWFCNRRQKEKRMT.

Belongs to the POU transcription factor family. Class-3 subfamily. In terms of tissue distribution, predominantly expressed in the central nervous system.

The protein resides in the nucleus. Its function is as follows. Transcription factor that may play important roles in patterning the embryonic brain. This Danio rerio (Zebrafish) protein is POU domain, class 3, transcription factor 3-B (pou3f3b).